The following is a 349-amino-acid chain: E3 ubiquitin-protein ligase SINA-like 10 (349 aa).

Positions methionine 1–valine 77 are disordered. The segment at cysteine 113–threonine 149 adopts an RING-type; degenerate zinc-finger fold. Positions valine 163–arginine 344 are SBD. The SIAH-type zinc-finger motif lies at alanine 166–lysine 224. Zn(2+) is bound by residues cysteine 171, cysteine 178, histidine 190, cysteine 194, cysteine 201, cysteine 206, histidine 218, and histidine 223.

Belongs to the SINA (Seven in absentia) family.

The enzyme catalyses S-ubiquitinyl-[E2 ubiquitin-conjugating enzyme]-L-cysteine + [acceptor protein]-L-lysine = [E2 ubiquitin-conjugating enzyme]-L-cysteine + N(6)-ubiquitinyl-[acceptor protein]-L-lysine.. The protein operates within protein modification; protein ubiquitination. Functionally, E3 ubiquitin-protein ligase that mediates ubiquitination and subsequent proteasomal degradation of target proteins. E3 ubiquitin ligases accept ubiquitin from an E2 ubiquitin-conjugating enzyme in the form of a thioester and then directly transfers the ubiquitin to targeted substrates. It probably triggers the ubiquitin-mediated degradation of different substrates. The sequence is that of E3 ubiquitin-protein ligase SINA-like 10 from Arabidopsis thaliana (Mouse-ear cress).